The primary structure comprises 608 residues: Chaperone protein DnaK (608 aa).

Thr174 is modified (phosphothreonine; by autocatalysis). Basic and acidic residues predominate over residues 493–505 (YEEEDRKRKESAE). 2 disordered regions span residues 493–514 (YEEEDRKRKESAETRNNADSMV) and 577–608 (GQAAGANPGAQTTGGEQGNVYDAEYKVVDDDK). Over residues 577-590 (GQAAGANPGAQTTG) the composition is skewed to low complexity. The segment covering 599-608 (AEYKVVDDDK) has biased composition (basic and acidic residues).

It belongs to the heat shock protein 70 family.

Acts as a chaperone. This Acetivibrio thermocellus (strain ATCC 27405 / DSM 1237 / JCM 9322 / NBRC 103400 / NCIMB 10682 / NRRL B-4536 / VPI 7372) (Clostridium thermocellum) protein is Chaperone protein DnaK.